Here is a 931-residue protein sequence, read N- to C-terminus: Valine--tRNA ligase (931 aa).

The 'HIGH' region signature appears at 43-53; that stretch reads PNVTGALHIGH. A disordered region spans residues 351 to 370; that stretch reads IPHTDKDGNAHDAEPRTIQT. Residues 353–365 are compositionally biased toward basic and acidic residues; the sequence is HTDKDGNAHDAEP. A 'KMSKS' region motif is present at residues 552-556; it reads KMSKS. Residue lysine 555 coordinates ATP. The interval 691–717 is disordered; sequence LQGRGLGEGDEAVPAPADGPLSPALSP. Residues 864–930 are a coiled coil; sequence VIDIAAERER…DRLSAALARL (67 aa).

It belongs to the class-I aminoacyl-tRNA synthetase family. ValS type 1 subfamily. As to quaternary structure, monomer.

Its subcellular location is the cytoplasm. It catalyses the reaction tRNA(Val) + L-valine + ATP = L-valyl-tRNA(Val) + AMP + diphosphate. In terms of biological role, catalyzes the attachment of valine to tRNA(Val). As ValRS can inadvertently accommodate and process structurally similar amino acids such as threonine, to avoid such errors, it has a 'posttransfer' editing activity that hydrolyzes mischarged Thr-tRNA(Val) in a tRNA-dependent manner. This chain is Valine--tRNA ligase, found in Sphingopyxis alaskensis (strain DSM 13593 / LMG 18877 / RB2256) (Sphingomonas alaskensis).